The primary structure comprises 394 residues: MNQTWRTHLQSKLQQLHEREQYRNLHVTEQAEETWLIRDEKRMLNLASNNYLGLAGDERLKEAAIACTRKYGTGATASRLVVGNYSLYEEVERSICDWKGTEKALVVNSGYTANIGVISSLVSRHDIVFSDKLNHASIVDGIILSGAEHKRYGHNDLDHLEKLLKTASPEKRKLIVTDTVFSMDGDTAYLRELVELKEKYGAILIVDEAHASGIYGIGGAGLSHIEDLAQKIDIHMGTFSKALGCYGAYLTGDAIYIEYLHNMMRSFIFTTALPPGTLGAVQKAIEIVQEDHKRRENLIANGEYFRSKLRDAGFNIGNSSTHIVPIVVGSNENALRFSKRLQEAGIAAIAIRPPTVPINSSRIRFAVTSQHTIADLKWAIDRIIHIAKEEELFV.

Residue arginine 23 coordinates substrate. Pyridoxal 5'-phosphate is bound at residue 110-111 (GY). Substrate is bound at residue histidine 135. Pyridoxal 5'-phosphate-binding positions include serine 182, 207-210 (DEAH), and 238-241 (TFSK). An N6-(pyridoxal phosphate)lysine modification is found at lysine 241. Threonine 355 serves as a coordination point for substrate.

This sequence belongs to the class-II pyridoxal-phosphate-dependent aminotransferase family. BioF subfamily. In terms of assembly, homodimer. The cofactor is pyridoxal 5'-phosphate.

It carries out the reaction 6-carboxyhexanoyl-[ACP] + L-alanine + H(+) = (8S)-8-amino-7-oxononanoate + holo-[ACP] + CO2. It functions in the pathway cofactor biosynthesis; biotin biosynthesis. Functionally, catalyzes the decarboxylative condensation of pimeloyl-[acyl-carrier protein] and L-alanine to produce 8-amino-7-oxononanoate (AON), [acyl-carrier protein], and carbon dioxide. The polypeptide is Putative 8-amino-7-oxononanoate synthase (bioF) (Bacillus cereus (strain Q1)).